The following is a 129-amino-acid chain: Small ribosomal subunit protein uS8 (129 aa).

It belongs to the universal ribosomal protein uS8 family. In terms of assembly, part of the 30S ribosomal subunit. Contacts proteins S5 and S12.

Its function is as follows. One of the primary rRNA binding proteins, it binds directly to 16S rRNA central domain where it helps coordinate assembly of the platform of the 30S subunit. The sequence is that of Small ribosomal subunit protein uS8 from Mycoplasma capricolum subsp. capricolum (strain California kid / ATCC 27343 / NCTC 10154).